The primary structure comprises 151 residues: Large ribosomal subunit protein uL13 (151 aa).

Belongs to the universal ribosomal protein uL13 family. In terms of assembly, part of the 50S ribosomal subunit.

In terms of biological role, this protein is one of the early assembly proteins of the 50S ribosomal subunit, although it is not seen to bind rRNA by itself. It is important during the early stages of 50S assembly. This is Large ribosomal subunit protein uL13 from Synechococcus elongatus (strain ATCC 33912 / PCC 7942 / FACHB-805) (Anacystis nidulans R2).